Reading from the N-terminus, the 520-residue chain is Calcium-dependent protein kinase 25 (520 aa).

Glycine 2 carries the N-myristoyl glycine lipid modification. Residues 31 to 87 (PLKPQLQDKPPQPMLMNKDDDKTKLNDTHGDPKLLEGKEKPAQKQTSQGQGGRKCSD) form a disordered region. Positions 47–72 (NKDDDKTKLNDTHGDPKLLEGKEKPA) are enriched in basic and acidic residues. Residues 132–390 (YNLGSKLGHG…AQQVLCHPWI (259 aa)) form the Protein kinase domain. Residues 138-146 (LGHGQFGTT) and lysine 161 each bind ATP. Aspartate 256 serves as the catalytic Proton acceptor. Phosphoserine is present on serine 296. An autoinhibitory domain region spans residues 396–426 (APDTPLDTTVLSRLKKFSATDKLKKMALRVI). The EF-hand 1 domain occupies 433–468 (EEIHELRETFKTIDSGKSGRVTYKELKNGLERFNTN). Aspartate 446, serine 450, arginine 452, glutamate 457, aspartate 483, glutamate 487, threonine 489, and glutamate 494 together coordinate Ca(2+). The 37-residue stretch at 469–505 (LDNSDINSLMQIPTDVHLEDTVDYNEFIEAIVRLRQI) folds into the EF-hand 2; degenerate domain.

Belongs to the protein kinase superfamily. Ser/Thr protein kinase family. CDPK subfamily.

The protein localises to the membrane. It carries out the reaction L-seryl-[protein] + ATP = O-phospho-L-seryl-[protein] + ADP + H(+). It catalyses the reaction L-threonyl-[protein] + ATP = O-phospho-L-threonyl-[protein] + ADP + H(+). Its activity is regulated as follows. Activated by calcium. Autophosphorylation may play an important role in the regulation of the kinase activity. May play a role in signal transduction pathways that involve calcium as a second messenger. In Arabidopsis thaliana (Mouse-ear cress), this protein is Calcium-dependent protein kinase 25 (CPK25).